Reading from the N-terminus, the 131-residue chain is Large ribosomal subunit protein bL21 (131 aa).

The protein belongs to the bacterial ribosomal protein bL21 family. As to quaternary structure, part of the 50S ribosomal subunit. Contacts protein L20.

Its function is as follows. This protein binds to 23S rRNA in the presence of protein L20. The sequence is that of Large ribosomal subunit protein bL21 from Cereibacter sphaeroides (strain ATCC 17023 / DSM 158 / JCM 6121 / CCUG 31486 / LMG 2827 / NBRC 12203 / NCIMB 8253 / ATH 2.4.1.) (Rhodobacter sphaeroides).